The following is a 300-amino-acid chain: Beta-lactamase (300 aa).

An N-terminal signal peptide occupies residues 1–29 (MTMFKTTFRQTATIAVSLISLLVSPMLWA). The active-site Acyl-ester intermediate is Ser75. 239-241 (KTG) provides a ligand contact to substrate.

This sequence belongs to the class-A beta-lactamase family. In terms of assembly, monomer.

It catalyses the reaction a beta-lactam + H2O = a substituted beta-amino acid. Functionally, hydrolyzes broad-spectrum beta-lactam antibiotics. Active against cephalosporins such as cefuroxime and cefotaxime. This chain is Beta-lactamase (blaB), found in Proteus vulgaris.